Reading from the N-terminus, the 94-residue chain is uncharacterized protein (94 aa).

This is an uncharacterized protein from Narcissus mosaic virus (NMV).